The chain runs to 66 residues: Phylloseptin-S3 (66 aa).

The N-terminal stretch at 1–22 (MAFLKKSLFLVLFLGLVSLSIC) is a signal peptide. A propeptide spanning residues 23–46 (EEEKRETEEEEHDQEEDDKSEEKR) is cleaved from the precursor. A disordered region spans residues 25-44 (EKRETEEEEHDQEEDDKSEE). The segment covering 30-41 (EEEEHDQEEDDK) has biased composition (acidic residues). Phe-65 is modified (phenylalanine amide).

It belongs to the frog skin active peptide (FSAP) family. Phylloseptin subfamily. In terms of tissue distribution, expressed by the skin glands.

Its subcellular location is the secreted. The protein resides in the target cell membrane. Its function is as follows. Antimicrobial peptide with activity against the Gram-positive S.pyogenes (MIC=12.5 uM), but not against all other bacteria tested (both Gram-positive and Gram-negative). Does not show activity against fungi, and against Leishmania species. This chain is Phylloseptin-S3, found in Phyllomedusa sauvagei (Sauvage's leaf frog).